A 308-amino-acid chain; its full sequence is Ornithine carbamoyltransferase (308 aa).

Carbamoyl phosphate contacts are provided by residues 56–59 (STRT), glutamine 83, arginine 107, and 134–137 (HPCQ). Residues asparagine 165, aspartate 225, and 229–230 (SM) contribute to the L-ornithine site. Residues 266–267 (CL) and arginine 294 contribute to the carbamoyl phosphate site.

This sequence belongs to the aspartate/ornithine carbamoyltransferase superfamily. OTCase family.

Its subcellular location is the cytoplasm. The enzyme catalyses carbamoyl phosphate + L-ornithine = L-citrulline + phosphate + H(+). The protein operates within amino-acid biosynthesis; L-arginine biosynthesis; L-arginine from L-ornithine and carbamoyl phosphate: step 1/3. Its function is as follows. Reversibly catalyzes the transfer of the carbamoyl group from carbamoyl phosphate (CP) to the N(epsilon) atom of ornithine (ORN) to produce L-citrulline. The protein is Ornithine carbamoyltransferase of Roseobacter denitrificans (strain ATCC 33942 / OCh 114) (Erythrobacter sp. (strain OCh 114)).